The chain runs to 633 residues: Phosphomethylpyrimidine synthase (633 aa).

Substrate contacts are provided by residues N245, M274, Y303, H339, 359-361 (SRG), 400-403 (DGLR), and E439. H443 serves as a coordination point for Zn(2+). Y466 serves as a coordination point for substrate. Residue H507 participates in Zn(2+) binding. The [4Fe-4S] cluster site is built by C587, C590, and C595.

It belongs to the ThiC family. Homodimer. It depends on [4Fe-4S] cluster as a cofactor.

The enzyme catalyses 5-amino-1-(5-phospho-beta-D-ribosyl)imidazole + S-adenosyl-L-methionine = 4-amino-2-methyl-5-(phosphooxymethyl)pyrimidine + CO + 5'-deoxyadenosine + formate + L-methionine + 3 H(+). The protein operates within cofactor biosynthesis; thiamine diphosphate biosynthesis. In terms of biological role, catalyzes the synthesis of the hydroxymethylpyrimidine phosphate (HMP-P) moiety of thiamine from aminoimidazole ribotide (AIR) in a radical S-adenosyl-L-methionine (SAM)-dependent reaction. This Neisseria gonorrhoeae (strain ATCC 700825 / FA 1090) protein is Phosphomethylpyrimidine synthase.